The sequence spans 159 residues: Transcription elongation factor A protein-like 1 (159 aa).

The tract at residues 1 to 99 (MDKPRKENEE…CGVGKHKLEE (99 aa)) is disordered. The segment covering 17-34 (KTDEERPPVEHSPEKQSL) has biased composition (basic and acidic residues). Acidic residues predominate over residues 37–54 (QSSEEQSSEEEFFPEELL). Over residues 64-80 (SEERPPQEGLSRKDLFE) the composition is skewed to basic and acidic residues.

The protein belongs to the TFS-II family. TFA subfamily.

It localises to the nucleus. Functionally, may be involved in transcriptional regulation. Modulates various viral and cellular promoters in a promoter context-dependent manner. Does not bind DNA directly. The polypeptide is Transcription elongation factor A protein-like 1 (Ateles geoffroyi (Black-handed spider monkey)).